Here is a 378-residue protein sequence, read N- to C-terminus: Queuine tRNA-ribosyltransferase (378 aa).

Residue aspartate 91 is the Proton acceptor of the active site. Residues 91 to 95 (DSGGF), aspartate 145, glutamine 197, and glycine 224 contribute to the substrate site. Aspartate 274 acts as the Nucleophile in catalysis. An RNA binding; important for wobble base 34 recognition region spans residues 279–283 (TRLAR). Residues cysteine 312, cysteine 314, cysteine 317, and histidine 343 each coordinate Zn(2+).

It belongs to the queuine tRNA-ribosyltransferase family. In terms of assembly, homodimer. Within each dimer, one monomer is responsible for RNA recognition and catalysis, while the other monomer binds to the replacement base PreQ1. The cofactor is Zn(2+).

It catalyses the reaction 7-aminomethyl-7-carbaguanine + guanosine(34) in tRNA = 7-aminomethyl-7-carbaguanosine(34) in tRNA + guanine. Its pathway is tRNA modification; tRNA-queuosine biosynthesis. In terms of biological role, catalyzes the base-exchange of a guanine (G) residue with the queuine precursor 7-aminomethyl-7-deazaguanine (PreQ1) at position 34 (anticodon wobble position) in tRNAs with GU(N) anticodons (tRNA-Asp, -Asn, -His and -Tyr). Catalysis occurs through a double-displacement mechanism. The nucleophile active site attacks the C1' of nucleotide 34 to detach the guanine base from the RNA, forming a covalent enzyme-RNA intermediate. The proton acceptor active site deprotonates the incoming PreQ1, allowing a nucleophilic attack on the C1' of the ribose to form the product. After dissociation, two additional enzymatic reactions on the tRNA convert PreQ1 to queuine (Q), resulting in the hypermodified nucleoside queuosine (7-(((4,5-cis-dihydroxy-2-cyclopenten-1-yl)amino)methyl)-7-deazaguanosine). This is Queuine tRNA-ribosyltransferase from Methylacidiphilum infernorum (isolate V4) (Methylokorus infernorum (strain V4)).